Consider the following 57-residue polypeptide: Delta-elapitoxin-Cb1a (57 aa).

4 disulfides stabilise this stretch: Cys-3–Cys-22, Cys-15–Cys-36, Cys-40–Cys-49, and Cys-50–Cys-55.

It belongs to the three-finger toxin family. Short-chain subfamily. Expressed by the venom gland.

It localises to the secreted. This toxin shifts the voltage-dependence of Nav1.4/SCN4A activation to more hyperpolarised potentials, inhibits inactivation, and produces large ramp currents, consistent with its profound effects on contractile force in an isolated skeletal muscle preparation. This toxin produces large muscle contractions and fasciculations in the indirectly stimulated chick biventer cervicis nerve-muscle assay, which are significantly inhibited by the addition of the sodium channel antagonist tetrodotoxin. The polypeptide is Delta-elapitoxin-Cb1a (Calliophis bivirgatus (Blue Malaysian coral snake)).